A 373-amino-acid polypeptide reads, in one-letter code: Glutamate 5-kinase (373 aa).

Residue lysine 15 participates in ATP binding. Serine 56, aspartate 143, and asparagine 155 together coordinate substrate. Residue 175 to 176 coordinates ATP; it reads SD. Positions 281–358 constitute a PUA domain; it reads KGTLTIDAGA…PDVMTILGIS (78 aa).

This sequence belongs to the glutamate 5-kinase family.

It is found in the cytoplasm. It carries out the reaction L-glutamate + ATP = L-glutamyl 5-phosphate + ADP. Its pathway is amino-acid biosynthesis; L-proline biosynthesis; L-glutamate 5-semialdehyde from L-glutamate: step 1/2. Functionally, catalyzes the transfer of a phosphate group to glutamate to form L-glutamate 5-phosphate. This is Glutamate 5-kinase from Bradyrhizobium diazoefficiens (strain JCM 10833 / BCRC 13528 / IAM 13628 / NBRC 14792 / USDA 110).